Consider the following 997-residue polypeptide: Glutamate [NMDA] receptor subunit 1 (997 aa).

An N-terminal signal peptide occupies residues 1–26 (MAVAGFVFCWPLLGLTIVLLVAPIDA). At 27-573 (AQRHTASDNP…TLVSFLQPFS (547 aa)) the chain is on the extracellular side. N-linked (GlcNAc...) asparagine glycans are attached at residues asparagine 258, asparagine 314, asparagine 345, asparagine 397, asparagine 454, asparagine 481, and asparagine 501. Residues 530 to 532 (PLT) and arginine 537 each bind glycine. Residues 574-594 (NTLWILVMVSVHVVALVLYLL) form a helical membrane-spanning segment. At 595–651 (DRFSPFGRFKLSHSDSNEEKALNLSSAVWFAWGVLLNSGIGEGTPRSFSARVLGMVW) the chain is on the cytoplasmic side. A helical transmembrane segment spans residues 652-672 (AGFAMIIVASYTANLAAFLVL). Over 673-831 (ERPKTKLSGI…KTPNTLGLKN (159 aa)) the chain is Extracellular. Residue asparagine 693 is glycosylated (N-linked (GlcNAc...) asparagine). Glycine contacts are provided by serine 703 and aspartate 747. The chain crosses the membrane as a helical span at residues 832 to 852 (MAGVFILVGVGIAGGVGLIII). Topologically, residues 853-997 (EVIYKKHQVK…YTSDVSHLVV (145 aa)) are cytoplasmic. The interval 970-997 (LGKTRPQQSVLPPRYSPGYTSDVSHLVV) is disordered. Polar residues predominate over residues 987–997 (GYTSDVSHLVV).

The protein belongs to the glutamate-gated ion channel (TC 1.A.10.1) family. As to quaternary structure, forms a heteromeric NMDA channel with Nmdar2.

It is found in the cell membrane. The protein resides in the postsynaptic cell membrane. The protein localises to the postsynaptic density. In terms of biological role, NMDA receptor subtype of glutamate-gated ion channels with high calcium permeability and voltage-dependent sensitivity to magnesium. Mediated by glycine. This protein plays a key role in synaptic plasticity, synaptogenesis, excitotoxicity, memory acquisition and learning. It mediates neuronal functions in glutamate neurotransmission. Is involved in the cell surface targeting of NMDA receptors. Plays a role in associative learning and in long-term memory consolidation. This is Glutamate [NMDA] receptor subunit 1 from Drosophila yakuba (Fruit fly).